Here is a 547-residue protein sequence, read N- to C-terminus: Glucose-6-phosphate isomerase (547 aa).

Residue glutamate 351 is the Proton donor of the active site. Residues histidine 382 and lysine 511 contribute to the active site.

The protein belongs to the GPI family.

The protein localises to the cytoplasm. It catalyses the reaction alpha-D-glucose 6-phosphate = beta-D-fructose 6-phosphate. It functions in the pathway carbohydrate biosynthesis; gluconeogenesis. It participates in carbohydrate degradation; glycolysis; D-glyceraldehyde 3-phosphate and glycerone phosphate from D-glucose: step 2/4. Its function is as follows. Catalyzes the reversible isomerization of glucose-6-phosphate to fructose-6-phosphate. This is Glucose-6-phosphate isomerase from Xanthobacter autotrophicus (strain ATCC BAA-1158 / Py2).